The primary structure comprises 88 residues: Small ribosomal subunit protein bS16 (88 aa).

The protein belongs to the bacterial ribosomal protein bS16 family.

The polypeptide is Small ribosomal subunit protein bS16 (Geobacter metallireducens (strain ATCC 53774 / DSM 7210 / GS-15)).